Reading from the N-terminus, the 70-residue chain is Large ribosomal subunit protein uL29 (70 aa).

This sequence belongs to the universal ribosomal protein uL29 family.

The protein is Large ribosomal subunit protein uL29 of Prochlorococcus marinus (strain MIT 9211).